The following is an 862-amino-acid chain: Protein translocase subunit SecA (862 aa).

ATP is bound by residues Gln88, Gly106–Thr110, and Asp506. Zn(2+)-binding residues include Cys839, Cys841, Cys850, and His851.

Belongs to the SecA family. As to quaternary structure, monomer and homodimer. Part of the essential Sec protein translocation apparatus which comprises SecA, SecYEG and auxiliary proteins SecDF-YajC and YidC. Zn(2+) is required as a cofactor.

It is found in the cell inner membrane. The protein localises to the cytoplasm. It catalyses the reaction ATP + H2O + cellular proteinSide 1 = ADP + phosphate + cellular proteinSide 2.. Part of the Sec protein translocase complex. Interacts with the SecYEG preprotein conducting channel. Has a central role in coupling the hydrolysis of ATP to the transfer of proteins into and across the cell membrane, serving as an ATP-driven molecular motor driving the stepwise translocation of polypeptide chains across the membrane. The protein is Protein translocase subunit SecA of Campylobacter jejuni subsp. jejuni serotype O:2 (strain ATCC 700819 / NCTC 11168).